A 335-amino-acid polypeptide reads, in one-letter code: UPF0353 protein MAP_3435c (335 aa).

2 consecutive transmembrane segments (helical) span residues 18–38 and 67–87; these read WFFL…VQQF and VPTI…AGPT. A VWFA domain is found at 98-294; the sequence is VVMLVIDVSE…DSLKNVYSTL (197 aa). A helical transmembrane segment spans residues 309 to 329; the sequence is MAWMLLGAVVLAGAVLAGLLL.

This sequence belongs to the UPF0353 family.

It localises to the cell membrane. The chain is UPF0353 protein MAP_3435c from Mycolicibacterium paratuberculosis (strain ATCC BAA-968 / K-10) (Mycobacterium paratuberculosis).